The chain runs to 338 residues: MTTVQEAVPNLIPTQDATPRPAPKKVEAGVKLRGADKVARIPVKIIPTDELPKKPDWIRVRIPVSPEVDRIKQLLRKHKLHSVCEEASCPNLGECFSGGTATFMIMGDICTRRCPFCDVGHGRPKPLDVDEPKNLAVAIADLRLKYVVITSVDRDDLRDGGAQHFADCIREIRALSPGVQLETLVPDYRGRMDVALEITAQEPPDVFNHNLETVPRLYKAARPGSDYDWSLDLLQKFKQMVPHVPTKSGLMLGLGETDEEVIEVMHRMREHDIDMLTLGQYLQPSRSHLPVQRFVHPDTFAWFAEEGYKMGFKNVASGPLVRSSYHADQQAHEAKIKL.

The disordered stretch occupies residues 1–24; the sequence is MTTVQEAVPNLIPTQDATPRPAPK. [4Fe-4S] cluster is bound by residues C84, C89, C95, C110, C114, C117, and S324. Positions 96-313 constitute a Radical SAM core domain; that stretch reads FSGGTATFMI…AEEGYKMGFK (218 aa).

It belongs to the radical SAM superfamily. Lipoyl synthase family. [4Fe-4S] cluster serves as cofactor.

It localises to the cytoplasm. It carries out the reaction [[Fe-S] cluster scaffold protein carrying a second [4Fe-4S](2+) cluster] + N(6)-octanoyl-L-lysyl-[protein] + 2 oxidized [2Fe-2S]-[ferredoxin] + 2 S-adenosyl-L-methionine + 4 H(+) = [[Fe-S] cluster scaffold protein] + N(6)-[(R)-dihydrolipoyl]-L-lysyl-[protein] + 4 Fe(3+) + 2 hydrogen sulfide + 2 5'-deoxyadenosine + 2 L-methionine + 2 reduced [2Fe-2S]-[ferredoxin]. It functions in the pathway protein modification; protein lipoylation via endogenous pathway; protein N(6)-(lipoyl)lysine from octanoyl-[acyl-carrier-protein]: step 2/2. In terms of biological role, catalyzes the radical-mediated insertion of two sulfur atoms into the C-6 and C-8 positions of the octanoyl moiety bound to the lipoyl domains of lipoate-dependent enzymes, thereby converting the octanoylated domains into lipoylated derivatives. The sequence is that of Lipoyl synthase from Pseudomonas putida (strain W619).